Here is a 402-residue protein sequence, read N- to C-terminus: Tumor necrosis factor receptor superfamily member 11B (402 aa).

The first 21 residues, 1 to 21 (MNKLLCCALVFLDISIKWTTQ), serve as a signal peptide directing secretion. TNFR-Cys repeat units lie at residues 24 to 62 (FPPK…KTVC), 64 to 105 (PCPD…NRVC), 106 to 142 (ECEE…NTVC), and 144 to 185 (RCPD…DNIC). 8 cysteine pairs are disulfide-bonded: cysteine 41-cysteine 54, cysteine 44-cysteine 62, cysteine 65-cysteine 80, cysteine 83-cysteine 97, cysteine 87-cysteine 105, cysteine 107-cysteine 118, cysteine 124-cysteine 142, and cysteine 145-cysteine 160. Residues asparagine 165 and asparagine 178 are each glycosylated (N-linked (GlcNAc...) asparagine). Cysteine 166 and cysteine 185 are oxidised to a cystine. 2 consecutive Death domains span residues 198-269 (IDMT…DMVK) and 270-365 (KIIQ…VIQS).

Homodimer. Interacts with TNFSF10 and TNFSF11. In terms of processing, N-glycosylated. Contains sialic acid residues.

Its subcellular location is the secreted. Acts as a decoy receptor for TNFSF11/RANKL and thereby neutralizes its function in osteoclastogenesis. Inhibits the activation of osteoclasts and promotes osteoclast apoptosis. Bone homeostasis seems to depend on the local ratio between TNFSF11 and TNFRSF11B. May also play a role in preventing arterial calcification. May act as decoy receptor for TNFSF10/TRAIL and protect against apoptosis. TNFSF10/TRAIL binding blocks the inhibition of osteoclastogenesis. This chain is Tumor necrosis factor receptor superfamily member 11B (TNFRSF11B), found in Bos taurus (Bovine).